The chain runs to 312 residues: MWPNITAAPFLLTGFPGLEAAHHWISIPFFAVYVCILLGNGMLLYLIKHDHSLHEPMYYFLTMLAGTDLMVTLTTMPTVMGILWVNHREISSVGCFLQAYFIHSLSVVESGSLLAMAYDCFIAIRNPLRYASILTNTRVIALGVGVFLRGFVSILPVILRLFSFSYCKSHVITRAFCLHQEIMRLACADITFNRLYPVILISLTIFLDCLIILFSYILILNTVIGIASGEERAKALNTCISHISCVLIFYVTVMGLTFIYRFGKNVPEVVHIIMSYIYFLFPPLMNPVIYSIKTKQIQYGIIRLLSKHRFSS.

At 1–23 the chain is on the extracellular side; sequence MWPNITAAPFLLTGFPGLEAAHH. Asn4 carries an N-linked (GlcNAc...) asparagine glycan. A helical membrane pass occupies residues 24-44; sequence WISIPFFAVYVCILLGNGMLL. At 45 to 52 the chain is on the cytoplasmic side; sequence YLIKHDHS. A helical membrane pass occupies residues 53–73; it reads LHEPMYYFLTMLAGTDLMVTL. Residues 74–97 are Extracellular-facing; it reads TTMPTVMGILWVNHREISSVGCFL. Cys95 and Cys187 form a disulfide bridge. A helical transmembrane segment spans residues 98–118; the sequence is QAYFIHSLSVVESGSLLAMAY. Residues 119–137 are Cytoplasmic-facing; that stretch reads DCFIAIRNPLRYASILTNT. A helical membrane pass occupies residues 138–158; sequence RVIALGVGVFLRGFVSILPVI. Residues 159-194 are Extracellular-facing; the sequence is LRLFSFSYCKSHVITRAFCLHQEIMRLACADITFNR. Residues 195-215 form a helical membrane-spanning segment; it reads LYPVILISLTIFLDCLIILFS. Residues 216 to 235 lie on the Cytoplasmic side of the membrane; that stretch reads YILILNTVIGIASGEERAKA. Residues 236 to 256 form a helical membrane-spanning segment; that stretch reads LNTCISHISCVLIFYVTVMGL. Over 257–271 the chain is Extracellular; it reads TFIYRFGKNVPEVVH. Residues 272 to 292 form a helical membrane-spanning segment; the sequence is IIMSYIYFLFPPLMNPVIYSI. Residues 293–312 lie on the Cytoplasmic side of the membrane; sequence KTKQIQYGIIRLLSKHRFSS.

Belongs to the G-protein coupled receptor 1 family. In terms of processing, ubiquitinated by the CRL2(FEM1A) and CRL2(FEM1C) complexes, which recognize the -Lys-Xaa-Xaa-Arg C-degron at the C-terminus, leading to its degradation.

It localises to the cell membrane. Functionally, odorant receptor. The polypeptide is Olfactory receptor 51B2 (OR51B2) (Homo sapiens (Human)).